The sequence spans 275 residues: Penicillin-insensitive murein endopeptidase (275 aa).

A signal peptide spans 1 to 19; the sequence is MKNWIVGMVALVTMVPVMA. 3 cysteine pairs are disulfide-bonded: C44-C264, C187-C235, and C216-C223. The Zn(2+) site is built by H110, H113, D120, D147, and H211. Residues 227-262 are disordered; sequence DTPPPGDGCGAELESWFQPPPPSAKPGKTLPPPLPP. Positions 244–262 are enriched in pro residues; sequence QPPPPSAKPGKTLPPPLPP.

This sequence belongs to the peptidase M74 family. In terms of assembly, dimer. Requires Zn(2+) as cofactor.

The protein localises to the periplasm. In terms of biological role, murein endopeptidase that cleaves the D-alanyl-meso-2,6-diamino-pimelyl amide bond that connects peptidoglycan strands. Likely plays a role in the removal of murein from the sacculus. This is Penicillin-insensitive murein endopeptidase from Yersinia pestis.